The primary structure comprises 504 residues: Maturase K (504 aa).

This sequence belongs to the intron maturase 2 family. MatK subfamily.

Its subcellular location is the plastid. The protein localises to the chloroplast. In terms of biological role, usually encoded in the trnK tRNA gene intron. Probably assists in splicing its own and other chloroplast group II introns. This is Maturase K from Lepidium virginicum (Virginia pepperweed).